Here is a 273-residue protein sequence, read N- to C-terminus: Cell division protein ZipA (273 aa).

A topological domain (periplasmic) is located at residue M1. The chain crosses the membrane as a helical span at residues 2 to 22; it reads DIGLREWLIVIGIIVIAGILF. Residues 23 to 273 lie on the Cytoplasmic side of the membrane; that stretch reads DGWRRMRGGK…ERRQMTIKQR (251 aa). Residues 61–127 are disordered; that stretch reads VVNREHEPSL…DLQERPQKEQ (67 aa).

The protein belongs to the ZipA family. In terms of assembly, interacts with FtsZ via their C-terminal domains.

Its subcellular location is the cell inner membrane. In terms of biological role, essential cell division protein that stabilizes the FtsZ protofilaments by cross-linking them and that serves as a cytoplasmic membrane anchor for the Z ring. Also required for the recruitment to the septal ring of downstream cell division proteins. This Stutzerimonas stutzeri (strain A1501) (Pseudomonas stutzeri) protein is Cell division protein ZipA.